The following is a 303-amino-acid chain: 2-dehydropantoate 2-reductase (303 aa).

NADP(+)-binding positions include 7–12, Asn98, and Ala122; that span reads GCGALG. Asn98 is a binding site for substrate. Lys176 (proton donor) is an active-site residue. Substrate contacts are provided by Asn180, Asn184, Asn194, and Ser244. Glu256 provides a ligand contact to NADP(+).

The protein belongs to the ketopantoate reductase family. As to quaternary structure, monomer.

The protein resides in the cytoplasm. The enzyme catalyses (R)-pantoate + NADP(+) = 2-dehydropantoate + NADPH + H(+). The protein operates within cofactor biosynthesis; (R)-pantothenate biosynthesis; (R)-pantoate from 3-methyl-2-oxobutanoate: step 2/2. Catalyzes the NADPH-dependent reduction of ketopantoate into pantoic acid. This is 2-dehydropantoate 2-reductase (panE) from Shigella flexneri.